A 192-amino-acid chain; its full sequence is MMISCTRTAILPLRRRLMTASTAYPIKFASSIIPGYGRGSADLGIPTANIPIDDVPVLDALDTGIYYGLVQILKTDKPSEKKTSEFQKDRVVDFQYTNKLNDQEINAVLPMVMSVGWNPFYKNDQKSAEIHIIHKFAHTFYGASIKVMVLGYLRPEKNFTSLEALVDEIHNDIKVSEEKMEGTREKKDQFWQ.

Residues Thr-47 and Asn-49 each coordinate Mg(2+). The active-site Nucleophile is the Glu-129.

This sequence belongs to the flavokinase family. The cofactor is Zn(2+). Mg(2+) serves as cofactor.

The enzyme catalyses riboflavin + ATP = FMN + ADP + H(+). Its pathway is cofactor biosynthesis; FMN biosynthesis; FMN from riboflavin (ATP route): step 1/1. Its function is as follows. Catalyzes the phosphorylation of riboflavin (vitamin B2) to form flavin mononucleotide (FMN) coenzyme. In Yarrowia lipolytica (strain CLIB 122 / E 150) (Yeast), this protein is Riboflavin kinase (FMN1).